A 794-amino-acid chain; its full sequence is Protocadherin beta-6 (794 aa).

An N-terminal signal peptide occupies residues 1 to 27 (MMQTKVQNKKRQVAFFILLMLWGEVGS). Topologically, residues 28 to 688 (ESIQYSVLEE…AQADLLTVYL (661 aa)) are extracellular. 5 consecutive Cadherin domains span residues 34-132 (VLEE…APEF), 137-241 (MLLK…VPEF), 246-345 (YEAQ…APEL), 350-449 (FISP…APAF), and 454-559 (YTLF…SPFV). The N-linked (GlcNAc...) asparagine glycan is linked to asparagine 46. An intrachain disulfide couples cysteine 95 to cysteine 101. An N-linked (GlcNAc...) asparagine glycan is attached at asparagine 183. Asparagine 416 carries an N-linked (GlcNAc...) asparagine glycan. Asparagine 565 carries an N-linked (GlcNAc...) asparagine glycan. Residues 566–669 (GSAPCTELVP…LVDGFSQPYL (104 aa)) form the Cadherin 6 domain. A helical membrane pass occupies residues 689 to 709 (VVALASVSSLFLFSVLLFVAV). The Cytoplasmic segment spans residues 710–794 (RLCRRSRAAS…PTSRNSFPFS (85 aa)). Residues 773-794 (PPQGTEREMEETPTSRNSFPFS) are disordered. Polar residues predominate over residues 784-794 (TPTSRNSFPFS).

As to quaternary structure, forms homodimers in trans (molecules expressed by two different cells). Forms promiscuous heterodimers in cis (at the plasma membrane of the same cell) with other protocadherins.

It localises to the cell membrane. Its function is as follows. Calcium-dependent cell-adhesion protein involved in cells self-recognition and non-self discrimination. Thereby, it is involved in the establishment and maintenance of specific neuronal connections in the brain. This Pan troglodytes (Chimpanzee) protein is Protocadherin beta-6.